We begin with the raw amino-acid sequence, 468 residues long: Heparan-sulfate 6-O-sulfotransferase 2 (468 aa).

Topologically, residues 1 to 9 (MDGKSNYSR) are cytoplasmic. The helical; Signal-anchor for type II membrane protein transmembrane segment at 10 to 30 (LLIALLMILFFGGIVLQYICS) threads the bilayer. The Lumenal portion of the chain corresponds to 31 to 468 (TSDWQLLHLA…DYLENVEQWR (438 aa)). A glycan (N-linked (GlcNAc...) asparagine) is linked at asparagine 79. 103-111 (HIQKTGGTT) is a binding site for 3'-phosphoadenylyl sulfate. Residues 133–134 (KK), arginine 150, tryptophan 155, and histidine 160 each bind substrate. The Proton acceptor role is filled by histidine 160. Residues arginine 197 and serine 205 each contribute to the 3'-phosphoadenylyl sulfate site. Substrate contacts are provided by histidine 209 and tryptophan 216. The N-linked (GlcNAc...) asparagine glycan is linked to asparagine 276. 329–331 (TQL) contributes to the 3'-phosphoadenylyl sulfate binding site. Asparagine 332 carries an N-linked (GlcNAc...) asparagine glycan. Residue 335–336 (RA) coordinates 3'-phosphoadenylyl sulfate. The disordered stretch occupies residues 409-447 (FKPTKEPPMTEQSPAFAEEKQADAERTLESETEGQVEEN). Basic and acidic residues predominate over residues 425–437 (AEEKQADAERTLE). Residues 438–447 (SETEGQVEEN) show a composition bias toward acidic residues.

It belongs to the sulfotransferase 6 family. Expressed ubiquitously during gastrulation. During early somitogenesis, strong expression in head and presumptive brain. During mid-somitogenesis, strong expression in eye, hindbrain and somitic boundaries and weak expression in tail bud. During late somitogenesis, strong expression in eye, hindbrain, branchial arch primordia, spinal cord and ventral medial somites. At 24 hours post-fertilization (hpf), strong expression throughout the head, with expression receeding from the trunk spinal cord, ventral medial somites and somitic boundaries; expressed in cells surrounding vascular structures of the dorsal aorta and caudal vein in the tail. At 36 hpf, expressed in lens, optic stalk, hindbrain and pectoral fin. At 48 hpf, expressed in eye, brain, otic vesicle and branchial arches.

The protein localises to the membrane. The enzyme catalyses alpha-D-glucosaminyl-[heparan sulfate](n) + 3'-phosphoadenylyl sulfate = 6-sulfo-alpha-D-glucosaminyl-[heparan sulfate](n) + adenosine 3',5'-bisphosphate + H(+). In terms of biological role, 6-O-sulfation enzyme which catalyzes the transfer of sulfate from 3'-phosphoadenosine 5'-phosphosulfate (PAPS) to position 6 of the N-sulfoglucosamine residue (GlcNS) of heparan sulfate. Required for muscle development and angiogenesis. The sequence is that of Heparan-sulfate 6-O-sulfotransferase 2 (hs6st2) from Danio rerio (Zebrafish).